A 372-amino-acid chain; its full sequence is Glutamate 5-kinase (372 aa).

Lysine 14 contributes to the ATP binding site. 3 residues coordinate substrate: serine 54, aspartate 141, and asparagine 153. Residue 173-174 (TD) coordinates ATP. Positions 280 to 358 (RGHVVIDAGA…GEIESVLGYM (79 aa)) constitute a PUA domain.

The protein belongs to the glutamate 5-kinase family.

Its subcellular location is the cytoplasm. It catalyses the reaction L-glutamate + ATP = L-glutamyl 5-phosphate + ADP. Its pathway is amino-acid biosynthesis; L-proline biosynthesis; L-glutamate 5-semialdehyde from L-glutamate: step 1/2. In terms of biological role, catalyzes the transfer of a phosphate group to glutamate to form L-glutamate 5-phosphate. In Burkholderia multivorans (strain ATCC 17616 / 249), this protein is Glutamate 5-kinase.